A 109-amino-acid polypeptide reads, in one-letter code: Large ribosomal subunit protein uL22 (109 aa).

The protein belongs to the universal ribosomal protein uL22 family. Part of the 50S ribosomal subunit.

In terms of biological role, this protein binds specifically to 23S rRNA; its binding is stimulated by other ribosomal proteins, e.g. L4, L17, and L20. It is important during the early stages of 50S assembly. It makes multiple contacts with different domains of the 23S rRNA in the assembled 50S subunit and ribosome. Its function is as follows. The globular domain of the protein is located near the polypeptide exit tunnel on the outside of the subunit, while an extended beta-hairpin is found that lines the wall of the exit tunnel in the center of the 70S ribosome. This Chromobacterium violaceum (strain ATCC 12472 / DSM 30191 / JCM 1249 / CCUG 213 / NBRC 12614 / NCIMB 9131 / NCTC 9757 / MK) protein is Large ribosomal subunit protein uL22.